Consider the following 240-residue polypeptide: Cytochrome c-551 (240 aa).

Residues C41, C44, H45, C128, C132, and H133 each coordinate heme c.

Post-translationally, binds 2 heme c groups per subunit.

The sequence is that of Cytochrome c-551 from Rhodocyclus tenuis (Rhodospirillum tenue).